The primary structure comprises 517 residues: GMP synthase [glutamine-hydrolyzing] (517 aa).

Residues 9–199 (RILILDFGSQ…VLGVCGCERL (191 aa)) form the Glutamine amidotransferase type-1 domain. The Nucleophile role is filled by Cys-86. Residues His-173 and Glu-175 contribute to the active site. Positions 200–392 (WTSESIIEDA…LGLPYNMLYR (193 aa)) constitute a GMPS ATP-PPase domain. 227–233 (SGGVDSS) lines the ATP pocket.

In terms of assembly, homodimer.

It catalyses the reaction XMP + L-glutamine + ATP + H2O = GMP + L-glutamate + AMP + diphosphate + 2 H(+). It participates in purine metabolism; GMP biosynthesis; GMP from XMP (L-Gln route): step 1/1. Catalyzes the synthesis of GMP from XMP. The protein is GMP synthase [glutamine-hydrolyzing] of Vibrio parahaemolyticus serotype O3:K6 (strain RIMD 2210633).